The primary structure comprises 237 residues: Lysophospholipase-like protein 1 (237 aa).

Position 2 is an N-acetylalanine (A2). Catalysis depends on charge relay system residues S124, D179, and H211.

It belongs to the AB hydrolase superfamily. AB hydrolase 2 family.

It localises to the cytoplasm. The protein resides in the cytosol. It catalyses the reaction S-hexadecanoyl-L-cysteinyl-[protein] + H2O = L-cysteinyl-[protein] + hexadecanoate + H(+). Functionally, palmitoyl thioesterase that catalyzes depalmitoylation of CGAS and KCNMA1. Acts as a regulator of innate immunity by mediating depalmitoylation of CGAS, thereby preventing CGAS homodimerization and cyclic GMP-AMP synthase activity. Does not exhibit phospholipase nor triacylglycerol lipase activity, able to hydrolyze only short chain substrates due to its shallow active site. The chain is Lysophospholipase-like protein 1 from Pongo abelii (Sumatran orangutan).